The sequence spans 248 residues: 4-hydroxy-tetrahydrodipicolinate reductase (248 aa).

NAD(+) is bound by residues 9–14, 77–79, and 104–107; these read GAKGRV, GTT, and APNF. The active-site Proton donor/acceptor is the His-134. His-135 is a (S)-2,3,4,5-tetrahydrodipicolinate binding site. Residue Lys-138 is the Proton donor of the active site. (S)-2,3,4,5-tetrahydrodipicolinate is bound at residue 144 to 145; that stretch reads GT.

The protein belongs to the DapB family.

It localises to the cytoplasm. It carries out the reaction (S)-2,3,4,5-tetrahydrodipicolinate + NAD(+) + H2O = (2S,4S)-4-hydroxy-2,3,4,5-tetrahydrodipicolinate + NADH + H(+). The enzyme catalyses (S)-2,3,4,5-tetrahydrodipicolinate + NADP(+) + H2O = (2S,4S)-4-hydroxy-2,3,4,5-tetrahydrodipicolinate + NADPH + H(+). It participates in amino-acid biosynthesis; L-lysine biosynthesis via DAP pathway; (S)-tetrahydrodipicolinate from L-aspartate: step 4/4. Its function is as follows. Catalyzes the conversion of 4-hydroxy-tetrahydrodipicolinate (HTPA) to tetrahydrodipicolinate. The protein is 4-hydroxy-tetrahydrodipicolinate reductase of Corynebacterium glutamicum (strain ATCC 13032 / DSM 20300 / JCM 1318 / BCRC 11384 / CCUG 27702 / LMG 3730 / NBRC 12168 / NCIMB 10025 / NRRL B-2784 / 534).